The chain runs to 36 residues: U1-ectatotoxin-Et1b subunit B (36 aa).

A disulfide bridge connects residues cysteine 11 and cysteine 33.

Belongs to the ectatomin family. Ectatomin-Et subfamily. As to quaternary structure, heterodimer of subunits A and B; disulfide-linked. In terms of tissue distribution, expressed by the venom gland.

The protein resides in the secreted. It is found in the target cell membrane. This chain is U1-ectatotoxin-Et1b subunit B, found in Ectatomma tuberculatum (Selva ant).